A 317-amino-acid polypeptide reads, in one-letter code: Glycine--tRNA ligase alpha subunit (317 aa).

Belongs to the class-II aminoacyl-tRNA synthetase family. As to quaternary structure, tetramer of two alpha and two beta subunits.

Its subcellular location is the cytoplasm. It catalyses the reaction tRNA(Gly) + glycine + ATP = glycyl-tRNA(Gly) + AMP + diphosphate. In Acidovorax ebreus (strain TPSY) (Diaphorobacter sp. (strain TPSY)), this protein is Glycine--tRNA ligase alpha subunit.